Here is a 461-residue protein sequence, read N- to C-terminus: Argininosuccinate lyase (461 aa).

2-(N(omega)-L-arginino)succinate is bound by residues Ser-28, Asn-115, and Thr-160. His-161 functions as the Proton acceptor in the catalytic mechanism. Ser-282 serves as the catalytic Proton donor. 2-(N(omega)-L-arginino)succinate contacts are provided by Asn-290, Tyr-322, Gln-327, and Lys-330.

The protein belongs to the lyase 1 family. Argininosuccinate lyase subfamily. In terms of assembly, homotetramer.

The enzyme catalyses 2-(N(omega)-L-arginino)succinate = fumarate + L-arginine. Its pathway is amino-acid biosynthesis; L-arginine biosynthesis; L-arginine from L-ornithine and carbamoyl phosphate: step 3/3. In Schizosaccharomyces pombe (strain 972 / ATCC 24843) (Fission yeast), this protein is Argininosuccinate lyase (arg7).